We begin with the raw amino-acid sequence, 202 residues long: uncharacterized protein (202 aa).

Residues 116–196 (LDLHGMTCSE…GKGTTWVLLK (81 aa)) form the Smr domain.

This is an uncharacterized protein from Treponema pallidum (strain Nichols).